The following is a 196-amino-acid chain: MTKILIVATSNAGKLREMQAYLANTDWELTLKPTELEVEETGDTFASNACLKASEVAKATGNWAIADDSGLQVDALNGLPGVYSARYGKTDGERISRLLKELGSEVNRQAQFVCVVAIASPDGAIALQAEGICRGEILHAPLGSGGFGYDPIFYVPEKQLTFAEMTPELKKSVSHRGKAFAALLPKMAAMLSSSAE.

9-14 (TSNAGK) provides a ligand contact to substrate. Residues glutamate 39 and aspartate 68 each coordinate Mg(2+). The Proton acceptor role is filled by aspartate 68. Residues serine 69, 147–150 (FGYD), lysine 170, and 175–176 (HR) each bind substrate.

It belongs to the HAM1 NTPase family. In terms of assembly, homodimer. The cofactor is Mg(2+).

It carries out the reaction XTP + H2O = XMP + diphosphate + H(+). It catalyses the reaction dITP + H2O = dIMP + diphosphate + H(+). The catalysed reaction is ITP + H2O = IMP + diphosphate + H(+). In terms of biological role, pyrophosphatase that catalyzes the hydrolysis of nucleoside triphosphates to their monophosphate derivatives, with a high preference for the non-canonical purine nucleotides XTP (xanthosine triphosphate), dITP (deoxyinosine triphosphate) and ITP. Seems to function as a house-cleaning enzyme that removes non-canonical purine nucleotides from the nucleotide pool, thus preventing their incorporation into DNA/RNA and avoiding chromosomal lesions. This chain is dITP/XTP pyrophosphatase, found in Nostoc sp. (strain PCC 7120 / SAG 25.82 / UTEX 2576).